Here is a 280-residue protein sequence, read N- to C-terminus: Urease accessory protein UreD (280 aa).

The protein belongs to the UreD family. In terms of assembly, ureD, UreF and UreG form a complex that acts as a GTP-hydrolysis-dependent molecular chaperone, activating the urease apoprotein by helping to assemble the nickel containing metallocenter of UreC. The UreE protein probably delivers the nickel.

It is found in the cytoplasm. Required for maturation of urease via the functional incorporation of the urease nickel metallocenter. The chain is Urease accessory protein UreD from Vibrio parahaemolyticus.